A 635-amino-acid chain; its full sequence is Sodium-dependent multivitamin transporter (635 aa).

3 consecutive transmembrane segments (helical) span residues 24 to 44 (FSIMDYVVFVLLLVLSLAIGL), 68 to 88 (CLPVALSLLATFQSAVAILGV), and 101 to 121 (FLGCCYFLGLLIPAHIFIPVF). A glycan (N-linked (GlcNAc...) asparagine) is linked at N138. 9 helical membrane passes run 143 to 163 (VCGTVTFIFQMVIYMGVVLYA), 176 to 196 (LWLSVLALGIVCTVYTALGGL), 199 to 219 (VIWTDVFQTLVMFLGQLAVII), 256 to 276 (FWTLAFGGVFMMLSLYGVNQA), 297 to 317 (VFPFQQVSLCVGCLIGLVMFA), 336 to 356 (FVLYFVMDLLKGLPGLPGLFI), 396 to 416 (IMLSRGLAFGYGLLCLGMAYI), 428 to 448 (ISIFGMVGGPLLGLFCLGMFF), and 456 to 476 (AVVGLLAGLVMAFWIGIGSIV). Residues N489 and N498 are each glycosylated (N-linked (GlcNAc...) asparagine). A helical transmembrane segment spans residues 528–548 (LWYSAHNSTTVIVVGLIVSLL).

Belongs to the sodium:solute symporter (SSF) (TC 2.A.21) family. Interacts with PDZD11. May be glycosylated. As to expression, expressed in microvessels of the brain (at protein level). Expressed in heart, brain, placenta, lung, liver, skeletal muscle, kidney, and pancreas.

It localises to the cell membrane. The protein localises to the apical cell membrane. It carries out the reaction biotin(out) + 2 Na(+)(out) = biotin(in) + 2 Na(+)(in). It catalyses the reaction (R)-pantothenate(out) + 2 Na(+)(out) = (R)-pantothenate(in) + 2 Na(+)(in). The enzyme catalyses (R)-lipoate(out) + 2 Na(+)(out) = (R)-lipoate(in) + 2 Na(+)(in). The catalysed reaction is iodide(out) + 2 Na(+)(out) = iodide(in) + 2 Na(+)(in). In terms of biological role, sodium-dependent multivitamin transporter that mediates the electrogenic transport of pantothenate, biotin, lipoate and iodide. Functions as a Na(+)-coupled substrate symporter where the stoichiometry of Na(+):substrate is 2:1, creating an electrochemical Na(+) gradient used as driving force for substrate uptake. Required for biotin and pantothenate uptake in the intestine across the brush border membrane. Plays a role in the maintenance of intestinal mucosa integrity, by providing the gut mucosa with biotin. Contributes to the luminal uptake of biotin and pantothenate into the brain across the blood-brain barrier. The chain is Sodium-dependent multivitamin transporter from Homo sapiens (Human).